Here is a 9439-residue protein sequence, read N- to C-terminus: Extracellular matrix-binding protein ebh (9439 aa).

30 FIVAR domains span residues 1815-1871 (ARRR…VNSA), 1901-1957 (AKEQ…INDA), 1985-2041 (AYDT…VRDA), 2071-2127 (AKKR…ITSE), 2155-2211 (AYNK…VTQA), 2241-2297 (AKNR…ISSE), 2325-2381 (AYNK…VEDA), 2411-2467 (AKEK…ITEN), 2488-2551 (DTTS…VNNA), 2581-2638 (ARNR…STEI), 2665-2720 (AKNQ…IRTN), 2748-2804 (AKTA…VSDE), 2832-2888 (AYNQ…VNNA), 2918-2974 (AKEQ…ISNA), 3002-3058 (AYNQ…VTAA), 3088-3144 (AKQQ…ITNE), 3172-3228 (AYNQ…VAQA), 3258-3314 (AKNQ…ISDE), 3335-3398 (DTTE…VNNA), 3428-3484 (ARLN…ITTE), 3512-3567 (AKTA…IKTN), 3595-3650 (IKRQ…VKES), 3678-3733 (AKNR…IRQN), 3802-3860 (SMTA…IDQK), 3928-3983 (AMTQ…LDPA), 4056-4114 (AMQA…VNQK), 4182-4240 (SMGT…VDNA), 4308-4365 (AMHT…INQK), 4433-4491 (VMEQ…IEQA), and 4559-4617 (SMQT…IDQT). Over residues 2495 to 2507 (EVRKLSRRGDTNN) the composition is skewed to basic and acidic residues. The tract at residues 2495-2514 (EVRKLSRRGDTNNKKPSSVS) is disordered. Over residues 2925 to 2938 (AVDQVPSTEGMTQQ) the composition is skewed to polar residues. The interval 2925-2951 (AVDQVPSTEGMTQQTKDDYNSKQQAAQ) is disordered. The disordered stretch occupies residues 4649–4674 (GYLNDPQKSGEESLVNGSNTRSEVEE). FIVAR domains are found at residues 4685–4743 (AMKQ…IEQK), 4811–4869 (AMQA…IEQA), 4937–4995 (AMSN…IEQA), 5063–5115 (AMEA…VLDK), 5189–5246 (AMLG…INQL), 5314–5372 (LMGA…VTTA), 5440–5498 (AMGE…IDQA), 5566–5624 (AMKK…ITNA), 5692–5750 (AMKQ…IADT), 5818–5875 (DMST…LQDL), 5943–6000 (AMKA…IKQA), 6068–6126 (KMEE…INRT), 6194–6252 (AMQQ…IQAI), and 6320–6378 (EMGT…IADA). The segment covering 5699–5712 (QVNQDDQISNSSPF) has biased composition (polar residues). Positions 5699–5719 (QVNQDDQISNSSPFINEDSDK) are disordered. The interval 6413–6434 (NNSQRQSEHDEINSAPSRTEVS) is disordered. 18 consecutive FIVAR domains span residues 6446–6504 (AMRQ…IEDA), 6572–6630 (AMKA…INRA), 6698–6755 (SMNQ…IDQA), 6823–6877 (TMKA…ANDE), 6949–7007 (AMKK…INTI), 7075–7133 (SMNT…VERA), 7201–7259 (DMKK…IENA), 7327–7384 (AMKH…IKQL), 7452–7510 (AMEN…IEHA), 7578–7636 (AMKA…INSI), 7704–7762 (AMET…VDIV), 7830–7888 (AMKS…VRQA), 7956–8010 (VMGK…TKQA), 8078–8137 (IMGE…IDTF), 8205–8264 (AMKS…IQGL), 8332–8391 (AMKD…VLGL), 8459–8518 (KMKL…IQHL), and 8587–8643 (AMQG…ANII). Residues 9306 to 9324 (TVGVITLTGLLSSFWLVLA) form a helical membrane-spanning segment. Basic and acidic residues-rich tracts occupy residues 9363–9375 (DKEE…DKHS), 9386–9395 (EKQLSEEDIH), and 9404–9413 (QNSDNKDTKQ). The segment at 9363 to 9439 (DKEEQIQNDD…VVKTKKRSKK (77 aa)) is disordered. Over residues 9414–9439 (KKVTSKKKKTPQSTKKVVKTKKRSKK) the composition is skewed to basic residues.

It is found in the cell membrane. The polypeptide is Extracellular matrix-binding protein ebh (ebh) (Staphylococcus epidermidis (strain ATCC 12228 / FDA PCI 1200)).